The primary structure comprises 196 residues: Imidazoleglycerol-phosphate dehydratase (196 aa).

It belongs to the imidazoleglycerol-phosphate dehydratase family.

The protein resides in the cytoplasm. It catalyses the reaction D-erythro-1-(imidazol-4-yl)glycerol 3-phosphate = 3-(imidazol-4-yl)-2-oxopropyl phosphate + H2O. It participates in amino-acid biosynthesis; L-histidine biosynthesis; L-histidine from 5-phospho-alpha-D-ribose 1-diphosphate: step 6/9. This chain is Imidazoleglycerol-phosphate dehydratase, found in Granulibacter bethesdensis (strain ATCC BAA-1260 / CGDNIH1).